The sequence spans 450 residues: Signal recognition particle 54 kDa protein (450 aa).

Residues 107 to 114, 188 to 192, and 247 to 250 each bind GTP; these read GIQGSGKT, DTAGR, and TKLD.

Belongs to the GTP-binding SRP family. SRP54 subfamily. In terms of assembly, part of the signal recognition particle protein translocation system, which is composed of SRP and FtsY. Archaeal SRP consists of a 7S RNA molecule of 300 nucleotides and two protein subunits: SRP54 and SRP19.

Its subcellular location is the cytoplasm. It carries out the reaction GTP + H2O = GDP + phosphate + H(+). Involved in targeting and insertion of nascent membrane proteins into the cytoplasmic membrane. Binds to the hydrophobic signal sequence of the ribosome-nascent chain (RNC) as it emerges from the ribosomes. The SRP-RNC complex is then targeted to the cytoplasmic membrane where it interacts with the SRP receptor FtsY. The polypeptide is Signal recognition particle 54 kDa protein (Methanococcus maripaludis (strain C5 / ATCC BAA-1333)).